Reading from the N-terminus, the 152-residue chain is Large ribosomal subunit protein bL9 (152 aa).

This sequence belongs to the bacterial ribosomal protein bL9 family.

In terms of biological role, binds to the 23S rRNA. The chain is Large ribosomal subunit protein bL9 from Picosynechococcus sp. (strain ATCC 27264 / PCC 7002 / PR-6) (Agmenellum quadruplicatum).